Consider the following 219-residue polypeptide: Thiopurine S-methyltransferase (219 aa).

4 residues coordinate S-adenosyl-L-methionine: Trp10, Leu45, Glu66, and Arg123.

The protein belongs to the class I-like SAM-binding methyltransferase superfamily. TPMT family.

The protein localises to the cytoplasm. The catalysed reaction is S-adenosyl-L-methionine + a thiopurine = S-adenosyl-L-homocysteine + a thiopurine S-methylether.. In Marinobacter nauticus (strain ATCC 700491 / DSM 11845 / VT8) (Marinobacter aquaeolei), this protein is Thiopurine S-methyltransferase.